The following is a 274-amino-acid chain: 3-methyl-2-oxobutanoate hydroxymethyltransferase (274 aa).

Mg(2+) is bound by residues Asp-46 and Asp-85. 3-methyl-2-oxobutanoate contacts are provided by residues 46 to 47 (DS), Asp-85, and Lys-115. Glu-117 serves as a coordination point for Mg(2+). Glu-184 serves as the catalytic Proton acceptor.

Belongs to the PanB family. Homodecamer; pentamer of dimers. It depends on Mg(2+) as a cofactor.

It localises to the cytoplasm. It catalyses the reaction 3-methyl-2-oxobutanoate + (6R)-5,10-methylene-5,6,7,8-tetrahydrofolate + H2O = 2-dehydropantoate + (6S)-5,6,7,8-tetrahydrofolate. It functions in the pathway cofactor biosynthesis; coenzyme A biosynthesis. Its function is as follows. Catalyzes the reversible reaction in which hydroxymethyl group from 5,10-methylenetetrahydrofolate is transferred onto alpha-ketoisovalerate to form ketopantoate. The sequence is that of 3-methyl-2-oxobutanoate hydroxymethyltransferase from Halobacterium salinarum (strain ATCC 29341 / DSM 671 / R1).